Here is a 166-residue protein sequence, read N- to C-terminus: Ribonuclease P protein component (166 aa).

This sequence belongs to the RnpA family. Consists of a catalytic RNA component (M1 or rnpB) and a protein subunit.

It carries out the reaction Endonucleolytic cleavage of RNA, removing 5'-extranucleotides from tRNA precursor.. In terms of biological role, RNaseP catalyzes the removal of the 5'-leader sequence from pre-tRNA to produce the mature 5'-terminus. It can also cleave other RNA substrates such as 4.5S RNA. The protein component plays an auxiliary but essential role in vivo by binding to the 5'-leader sequence and broadening the substrate specificity of the ribozyme. The protein is Ribonuclease P protein component of Helicobacter pylori (strain HPAG1).